An 815-amino-acid polypeptide reads, in one-letter code: Vacuolar proton translocating ATPase 100 kDa subunit (815 aa).

Residues 1 to 402 are Cytoplasmic-facing; that stretch reads MSFLRPSIWR…NAYGIAHYRE (402 aa). A helical transmembrane segment spans residues 403-421; sequence VNPAVLTIVTFPFLFGVMF. Over 422 to 423 the chain is Vacuolar; the sequence is GD. The chain crosses the membrane as a helical span at residues 424–440; that stretch reads VGHGALLLLSALGLISL. Over 441–454 the chain is Cytoplasmic; the sequence is EKKLAGKKLNELIQ. The helical transmembrane segment at 455 to 484 threads the bilayer; that stretch reads MPFDGRYVLFLMSLFSIYVGFIYNECFSIP. Over 485–530 the chain is Vacuolar; sequence MNIFGSQYNLNSTTGLYTYQHTDRVYPVGVDPLWKGAPNELVYYNS. Residues 531-550 form a helical membrane-spanning segment; the sequence is FKMKLSIIFGVVQMSVGICF. Residues 551-571 are Cytoplasmic-facing; the sequence is SLLNYLNQKGPIKIVNILTQF. Residues 572 to 592 form a helical membrane-spanning segment; sequence VPQMIFLWSIFGYMSVLIILK. Over 593–639 the chain is Vacuolar; it reads WVVPYRSFEVDKVDPPFILPTIIAMFLSPGGTPDVVFFSGQGAVQTA. Residues 640–659 traverse the membrane as a helical segment; sequence LLFLALISIPVMLVIKPLFM. The Cytoplasmic portion of the chain corresponds to 660–706; that stretch reads KRFHFQEVERKKLGHHEEEHDDEALYTGHHGEEFEMGEVFVHQVIHT. The helical transmembrane segment at 707-731 threads the bilayer; it reads IEFVLGAVSNTASYLRLWALSLAHS. The Vacuolar segment spans residues 732 to 749; it reads ELSSVFWERILIGQVERG. Residues 750 to 788 form a helical membrane-spanning segment; it reads NPFLAFVGFGAWLGASVAVLLLMESLSAFLHALRLHWVE. Topologically, residues 789-815 are cytoplasmic; sequence FQNKFYIGDGVRFIPYSATRILSEDDE.

Belongs to the V-ATPase 116 kDa subunit family. In terms of assembly, the V-ATPase is a heteromultimeric enzyme.

Its subcellular location is the cytoplasmic vesicle membrane. The protein resides in the endosome membrane. It is found in the vacuole membrane. The protein localises to the lysosome membrane. Its function is as follows. Essential component of the vacuolar proton pump (V-ATPase), a multimeric enzyme that catalyzes the translocation of protons across the membranes. Required for assembly and activity of the V-ATPase. Required in both the contractile vacuole system and the endosomal/lysosomal system. Also required for cytosolic pH regulation. The sequence is that of Vacuolar proton translocating ATPase 100 kDa subunit (vatM) from Dictyostelium discoideum (Social amoeba).